The chain runs to 629 residues: tRNA uridine 5-carboxymethylaminomethyl modification enzyme MnmG (629 aa).

Residues G14–G19, V126, and S181 each bind FAD. G273–F287 is a binding site for NAD(+). Q370 lines the FAD pocket.

It belongs to the MnmG family. Homodimer. Heterotetramer of two MnmE and two MnmG subunits. The cofactor is FAD.

It localises to the cytoplasm. Its function is as follows. NAD-binding protein involved in the addition of a carboxymethylaminomethyl (cmnm) group at the wobble position (U34) of certain tRNAs, forming tRNA-cmnm(5)s(2)U34. This is tRNA uridine 5-carboxymethylaminomethyl modification enzyme MnmG from Bacillus mycoides (strain KBAB4) (Bacillus weihenstephanensis).